Consider the following 581-residue polypeptide: Activating signal cointegrator 1 (581 aa).

Ala2 carries the N-acetylalanine modification. Residues 100-121 (DQLKRSRRKGRNKQEVPAFPEP) are disordered. A C4-type zinc finger spans residues 167-219 (GRHPCDCLGQKHKLINNCLVCGRIVCEQEGSGPCLFCGSLVCTNEEQDILQRD). Positions 200-300 (CLFCGSLVCT…ASDSNQWLSK (101 aa)) are mediates interaction with DDRGK1. A Phosphoserine modification is found at Ser276. Tyr289 is subject to Phosphotyrosine. The tract at residues 300–400 (KVEREMLQKR…WVDNTGSTPQ (101 aa)) is mediates interaction with UFL1. Residues Lys324 and Lys334 each participate in a glycyl lysine isopeptide (Lys-Gly) (interchain with G-Cter in UFM1) cross-link. Over residues 390 to 406 (QWVDNTGSTPQKKTSLS) the composition is skewed to polar residues. Residues 390–410 (QWVDNTGSTPQKKTSLSAGPR) form a disordered region. The 95-residue stretch at 437-531 (LSMHQPWASL…FQEQFPDISQ (95 aa)) folds into the ASCH domain.

In terms of assembly, interacts with the thyroid hormone receptor/TR (via the ligand-binding domain); this interaction requires the presence of thyroid hormone. Interacts with the androgen receptor/AR; in an androgen, testosterone and dihydrotestosterone-dependent manner. Interacts with ESR1 (estrogen ligand-bound); competes with UFSP2. Interacts with UFSP2; competes with ligand-bound ESR1. Interacts with DDRGK1 and UFL1; the interaction with DDRGK1 is direct. Interacts with NCOA1. Interacts with EP300. Part of the ASC-1 complex, that contains TRIP4, ASCC1, ASCC2 and ASCC3. Identified in the RQT (ribosome quality control trigger) complex, that contains ASCC2, ASCC3 and TRIP4. Interacts with NEK6. Interacts with CSRP1. Interacts with ZCCHC4. In terms of processing, phosphorylated by NEK6. Polyufmylated by the UFM1-conjugating system composed of the enzymes UBA5, UFC1 and UFL1. Deufmylated by the protease UFSP2. Ufmylation of TRIP4 is promoted by ligand-bound nuclear receptors that compete with UFSP2 for interaction with TRIP4. Nuclear receptors-induced ufmylation promotes the recruitment of additional transcriptional coactivators like EP300 and NCOA1 and therefore the assembly of a coactivator complex facilitating nuclear receptor-mediated transcription. As to expression, ubiquitously expressed. Expressed in the spinal cord, brain, paraspinal ganglia, thyroid, and submandibular glands. Expressed at low level in all the muscles (at protein level) but with higher expression in axial than in limb muscles.

Its subcellular location is the nucleus. The protein localises to the cytoplasm. It is found in the cytosol. The protein resides in the cytoskeleton. It localises to the microtubule organizing center. Its subcellular location is the centrosome. Its function is as follows. Transcription coactivator which associates with nuclear receptors, transcriptional coactivators including EP300, CREBBP and NCOA1, and basal transcription factors like TBP and TFIIA to facilitate nuclear receptors-mediated transcription. May thereby play an important role in establishing distinct coactivator complexes under different cellular conditions. Plays a role in thyroid hormone receptor and estrogen receptor transactivation. Also involved in androgen receptor transactivation. Plays a pivotal role in the transactivation of NF-kappa-B, SRF and AP1. Acts as a mediator of transrepression between nuclear receptor and either AP1 or NF-kappa-B. May play a role in the development of neuromuscular junction. May play a role in late myogenic differentiation. Also functions as part of the RQC trigger (RQT) complex that activates the ribosome quality control (RQC) pathway, a pathway that degrades nascent peptide chains during problematic translation. This is Activating signal cointegrator 1 from Mus musculus (Mouse).